Reading from the N-terminus, the 620-residue chain is 1-deoxy-D-xylulose-5-phosphate synthase (620 aa).

Thiamine diphosphate is bound by residues His80 and 121–123 (GHS). Asp152 contributes to the Mg(2+) binding site. Thiamine diphosphate contacts are provided by residues 153-154 (GA), Asn181, Tyr288, and Glu370. Asn181 contacts Mg(2+).

The protein belongs to the transketolase family. DXPS subfamily. In terms of assembly, homodimer. Mg(2+) is required as a cofactor. It depends on thiamine diphosphate as a cofactor.

The catalysed reaction is D-glyceraldehyde 3-phosphate + pyruvate + H(+) = 1-deoxy-D-xylulose 5-phosphate + CO2. The protein operates within metabolic intermediate biosynthesis; 1-deoxy-D-xylulose 5-phosphate biosynthesis; 1-deoxy-D-xylulose 5-phosphate from D-glyceraldehyde 3-phosphate and pyruvate: step 1/1. Catalyzes the acyloin condensation reaction between C atoms 2 and 3 of pyruvate and glyceraldehyde 3-phosphate to yield 1-deoxy-D-xylulose-5-phosphate (DXP). The polypeptide is 1-deoxy-D-xylulose-5-phosphate synthase (Salmonella agona (strain SL483)).